The primary structure comprises 346 residues: Sulfate/thiosulfate import ATP-binding protein CysA (346 aa).

One can recognise an ABC transporter domain in the interval 3-237; that stretch reads VRVANVRKEF…PNSPFVYGFI (235 aa). 35–42 serves as a coordination point for ATP; sequence GPSGSGKT.

Belongs to the ABC transporter superfamily. Sulfate/tungstate importer (TC 3.A.1.6) family. The complex is composed of two ATP-binding proteins (CysA), two transmembrane proteins (CysT and CysW) and a solute-binding protein (CysP).

It localises to the cell inner membrane. The catalysed reaction is sulfate(out) + ATP + H2O = sulfate(in) + ADP + phosphate + H(+). It carries out the reaction thiosulfate(out) + ATP + H2O = thiosulfate(in) + ADP + phosphate + H(+). Part of the ABC transporter complex CysAWTP involved in sulfate/thiosulfate import. Responsible for energy coupling to the transport system. In Mesorhizobium japonicum (strain LMG 29417 / CECT 9101 / MAFF 303099) (Mesorhizobium loti (strain MAFF 303099)), this protein is Sulfate/thiosulfate import ATP-binding protein CysA.